The chain runs to 471 residues: Anthocyanidin 3-O-glucosyltransferase (471 aa).

His-24 functions as the Proton acceptor in the catalytic mechanism. His-24 contacts an anthocyanidin. The Charge relay role is filled by Asp-130. Position 152 (Thr-152) interacts with UDP-alpha-D-glucose. Position 161 (His-161) interacts with an anthocyanidin. Ala-352, Gln-354, His-369, Trp-372, Ser-374, and Glu-377 together coordinate UDP-alpha-D-glucose. Position 392 (Gly-392) interacts with an anthocyanidin. UDP-alpha-D-glucose contacts are provided by Asp-393 and Gln-394.

It belongs to the UDP-glycosyltransferase family.

The enzyme catalyses an anthocyanidin + UDP-alpha-D-glucose + H(+) = an anthocyanidin 3-O-beta-D-glucoside + UDP. It functions in the pathway pigment biosynthesis; anthocyanin biosynthesis. In the presence of other necessary color factors, this glycosylation reaction allows the accumulation of anthocyanin pigments. This Zea mays (Maize) protein is Anthocyanidin 3-O-glucosyltransferase (BZ1).